Here is a 228-residue protein sequence, read N- to C-terminus: Superoxide dismutase [Mn], mitochondrial (228 aa).

Residues 1–24 (MALRNLMTKKPFAGILTFRQQLRC) constitute a mitochondrion transit peptide. Mn(2+) is bound by residues His52, His100, Asp189, and His193.

It belongs to the iron/manganese superoxide dismutase family. Homotetramer. The cofactor is Mn(2+).

The protein resides in the mitochondrion matrix. It carries out the reaction 2 superoxide + 2 H(+) = H2O2 + O2. Its function is as follows. Destroys superoxide anion radicals which are normally produced within the cells and which are toxic to biological systems. The polypeptide is Superoxide dismutase [Mn], mitochondrial (SODA) (Capsicum annuum (Capsicum pepper)).